The following is a 382-amino-acid chain: MKLHEYEAKELFAKYGVKIPPGRLALTPEEVRKAAEEMGPPVVLKAQVVVAGRGKAGGIKVAKRVEEAYELSKQMFGMNIKGLTVRKLYVTKYLEVEREMYLSLIIDRATRRFLFLASPVGGMDIEEIAKTTPEKIKRVYVDPFVGLRDYHVRSIVSWLGFSPGTAQWQQAASIVQAMYKIAVDYDAELVESNPLALTKEGDVVPLDARVIVDDNALFRHPELEKALEEDPRDITEFEAYAKKIGFHYVELDGDIGIIGNGAGLTMATMDLVYHFGGRPANFLDIGGGASREVVREAVKVLLNHPRAKVIFINIFGGITRADEVAYGVKEALQAAGGTTKKIVVRMKGTNEELGRAILAEIGVPLFESAEEAAKKAVELAKL.

The region spanning 9–240 (KELFAKYGVK…PRDITEFEAY (232 aa)) is the ATP-grasp domain. ATP contacts are provided by residues Lys45, 52–54 (GRG), Leu94, and Glu99. Asn193 and Asp207 together coordinate Mg(2+). Substrate is bound by residues Asn260 and 317 to 319 (GIT).

It belongs to the succinate/malate CoA ligase beta subunit family. As to quaternary structure, heterotetramer of two alpha and two beta subunits. The cofactor is Mg(2+).

The catalysed reaction is succinate + ATP + CoA = succinyl-CoA + ADP + phosphate. It carries out the reaction GTP + succinate + CoA = succinyl-CoA + GDP + phosphate. It participates in carbohydrate metabolism; tricarboxylic acid cycle; succinate from succinyl-CoA (ligase route): step 1/1. In terms of biological role, succinyl-CoA synthetase functions in the citric acid cycle (TCA), coupling the hydrolysis of succinyl-CoA to the synthesis of either ATP or GTP and thus represents the only step of substrate-level phosphorylation in the TCA. The beta subunit provides nucleotide specificity of the enzyme and binds the substrate succinate, while the binding sites for coenzyme A and phosphate are found in the alpha subunit. This is Succinate--CoA ligase [ADP-forming] subunit beta from Pyrobaculum calidifontis (strain DSM 21063 / JCM 11548 / VA1).